The sequence spans 426 residues: Lipase 7 (426 aa).

A signal peptide spans 1–15; it reads MFVFLALITLTTCLQ. Residues Asn-74, Asn-175, and Asn-179 are each glycosylated (N-linked (GlcNAc...) asparagine). 2 disulfides stabilise this stretch: Cys-108–Cys-269 and Cys-341–Cys-385. Ser-190 (charge relay system) is an active-site residue. Residue Asn-223 is glycosylated (N-linked (GlcNAc...) asparagine). His-358 serves as the catalytic Charge relay system. N-linked (GlcNAc...) asparagine glycans are attached at residues Asn-378, Asn-379, Asn-422, and Asn-423.

The protein belongs to the AB hydrolase superfamily. Lipase family. Class Lip subfamily.

The catalysed reaction is a triacylglycerol + H2O = a diacylglycerol + a fatty acid + H(+). In terms of biological role, secreted lipase that is able to hydrolze both the neutral triacylglycerols and the monopalmitate ester Tween 40, allowing the use of hydrolyzed products as carbon sources. Has broad lipolytic activity, which may be important for colonization and subsequent infection, therefore contributing to the persistence and virulence in human tissue. The polypeptide is Lipase 7 (Candida albicans (strain SC5314 / ATCC MYA-2876) (Yeast)).